Here is a 101-residue protein sequence, read N- to C-terminus: Small ribosomal subunit protein uS14 (101 aa).

The interval 52 to 72 is disordered; that stretch reads PRDSSPVRQRRRCRSTGRPRG. Residues 59–72 show a composition bias toward basic residues; the sequence is RQRRRCRSTGRPRG.

The protein belongs to the universal ribosomal protein uS14 family. Part of the 30S ribosomal subunit. Contacts proteins S3 and S10.

Its function is as follows. Binds 16S rRNA, required for the assembly of 30S particles and may also be responsible for determining the conformation of the 16S rRNA at the A site. This Nitrosococcus oceani (strain ATCC 19707 / BCRC 17464 / JCM 30415 / NCIMB 11848 / C-107) protein is Small ribosomal subunit protein uS14.